We begin with the raw amino-acid sequence, 57 residues long: Large ribosomal subunit protein bL32 (57 aa).

Positions 1–21 (MAVPKRRTSKKVKNQRRTHKK) are disordered.

The protein belongs to the bacterial ribosomal protein bL32 family.

In Oceanobacillus iheyensis (strain DSM 14371 / CIP 107618 / JCM 11309 / KCTC 3954 / HTE831), this protein is Large ribosomal subunit protein bL32.